The primary structure comprises 61 residues: Metallothionein-1C (61 aa).

A beta region spans residues Met1–Cys29. Residues Cys5, Cys7, Cys13, Cys15, Cys19, Cys21, Cys24, Cys26, Cys29, Cys33, Cys34, Cys36, Cys37, Cys41, Cys44, Cys48, Cys50, Cys57, Cys59, and Cys60 each contribute to the a divalent metal cation site. The segment at Lys30–Ala61 is alpha.

Belongs to the metallothionein superfamily. Type 1 family.

Its function is as follows. Metallothioneins have a high content of cysteine residues that bind various heavy metals; these proteins are transcriptionally regulated by both heavy metals and glucocorticoids. The chain is Metallothionein-1C (MT1C) from Ovis aries (Sheep).